The following is a 261-amino-acid chain: Kallikrein 1-related peptidase b26 (261 aa).

An N-terminal signal peptide occupies residues 1–18; that stretch reads MWFLILFPALSLGGIDAA. Residues 19-24 constitute a propeptide, activation peptide; it reads PPLQSR. The region spanning 25–258 is the Peptidase S1 domain; that stretch reads VVGGFNCEKN…FNSWIKDTMM (234 aa). Disulfide bonds link Cys-31–Cys-173, Cys-50–Cys-66, Cys-152–Cys-219, Cys-184–Cys-198, and Cys-209–Cys-234. His-65 (charge relay system) is an active-site residue. N-linked (GlcNAc...) asparagine glycosylation occurs at Asn-102. The Charge relay system role is filled by Asp-120. The Charge relay system role is filled by Ser-213.

This sequence belongs to the peptidase S1 family. Kallikrein subfamily.

The catalysed reaction is Preferential cleavage of Arg-|-Xaa bonds in small molecule substrates. Highly selective action to release kallidin (lysyl-bradykinin) from kininogen involves hydrolysis of Met-|-Xaa or Leu-|-Xaa.. In terms of biological role, glandular kallikreins cleave Met-Lys and Arg-Ser bonds in kininogen to release Lys-bradykinin. Functionally, prorenin-converting enzyme cleaves mouse REN-2 prorenin at a dibasic site to yield mature renin. The polypeptide is Kallikrein 1-related peptidase b26 (Klk1b26) (Mus musculus (Mouse)).